A 225-amino-acid polypeptide reads, in one-letter code: Orotate phosphoribosyltransferase (225 aa).

Lys31 is a 5-phospho-alpha-D-ribose 1-diphosphate binding site. Orotate is bound at residue 39 to 40 (FF). 5-phospho-alpha-D-ribose 1-diphosphate contacts are provided by residues 78–79 (YK), Arg105, Lys106, Lys109, His111, and 130–138 (DDVLTSGKA). Thr134 and Arg163 together coordinate orotate.

The protein belongs to the purine/pyrimidine phosphoribosyltransferase family. PyrE subfamily. In terms of assembly, homodimer.

It catalyses the reaction orotidine 5'-phosphate + diphosphate = orotate + 5-phospho-alpha-D-ribose 1-diphosphate. Its pathway is pyrimidine metabolism; UMP biosynthesis via de novo pathway; UMP from orotate: step 1/2. Its function is as follows. Catalyzes the transfer of a ribosyl phosphate group from 5-phosphoribose 1-diphosphate to orotate, leading to the formation of orotidine monophosphate (OMP). In Cryptococcus neoformans var. neoformans serotype D (strain B-3501A) (Filobasidiella neoformans), this protein is Orotate phosphoribosyltransferase (URA5).